A 155-amino-acid polypeptide reads, in one-letter code: 3-hydroxyacyl-[acyl-carrier-protein] dehydratase FabZ (155 aa).

Residue H58 is part of the active site.

It belongs to the thioester dehydratase family. FabZ subfamily.

The protein localises to the cytoplasm. The enzyme catalyses a (3R)-hydroxyacyl-[ACP] = a (2E)-enoyl-[ACP] + H2O. Its function is as follows. Involved in unsaturated fatty acids biosynthesis. Catalyzes the dehydration of short chain beta-hydroxyacyl-ACPs and long chain saturated and unsaturated beta-hydroxyacyl-ACPs. This is 3-hydroxyacyl-[acyl-carrier-protein] dehydratase FabZ from Rhizobium etli (strain CIAT 652).